The following is a 374-amino-acid chain: Tomoregulin-2 (374 aa).

A signal peptide spans 1–40; sequence MVLWESPRQCSSWTLCEGFCWLLLLPVTLLIIARPVKLAA. Topologically, residues 41-320 are extracellular; sequence FPTSLSDCQT…VPGPVRFQYV (280 aa). The N-linked (GlcNAc...) asparagine glycan is linked to N55. Kazal-like domains are found at residues 90–137 and 181–229; these read VCQF…SCAT and VCNI…RCQD. Intrachain disulfides connect C91/C121, C95/C114, C103/C135, C182/C213, C186/C206, and C195/C227. N230 carries N-linked (GlcNAc...) asparagine glycosylation. The EGF-like domain occupies 261–301; that stretch reads HHIPCPEHYNGFCMHGKCEHSINMQEPSCRCDAGYTGQHCE. 3 cysteine pairs are disulfide-bonded: C265–C278, C273–C289, and C291–C300. The segment at 303 to 320 is required for shedding; the sequence is KDYSVLYVVPGPVRFQYV. Residues 321–341 traverse the membrane as a helical segment; it reads LIAAVIGTIQIAVICVVVLCI. The Cytoplasmic segment spans residues 342–374; that stretch reads TRKCPRSNRIHRQKQNTGHYSSDNTTRASTRLI. The segment at 353–374 is disordered; sequence RQKQNTGHYSSDNTTRASTRLI. Over residues 356 to 374 the composition is skewed to polar residues; it reads QNTGHYSSDNTTRASTRLI.

It belongs to the tomoregulin family. In terms of processing, O-glycosylated; contains chondroitin sulfate glycosaminoglycans. Post-translationally, a soluble form (TMEFF2-ECD) is produced by proteolytic shedding. This shedding can be induced by phorbol ester or pro-inflammatory cytokines such as TNFalpha, and is mediated by a metalloproteinase ADAM. In terms of tissue distribution, widely expressed in the brain. In the olfactory bulb expressed in mitral cell, granule, and glomerular layers. In the hippocampus expressed in hippocampal cornu ammonis, pyramidal layer, dentate gyrus, and substantia nigra pars compacta.

The protein resides in the membrane. In terms of biological role, may be a survival factor for hippocampal and mesencephalic neurons. The shedded form may up-regulate cell proliferation. This Mus musculus (Mouse) protein is Tomoregulin-2 (Tmeff2).